The sequence spans 104 residues: Small ribosomal subunit protein uS10 (104 aa).

The protein belongs to the universal ribosomal protein uS10 family. In terms of assembly, part of the 30S ribosomal subunit.

Its function is as follows. Involved in the binding of tRNA to the ribosomes. The protein is Small ribosomal subunit protein uS10 of Aliarcobacter butzleri (strain RM4018) (Arcobacter butzleri).